The following is a 344-amino-acid chain: Meiotically up-regulated gene 10 protein (344 aa).

Residues 48-207 form the DH domain; sequence EFNSILQEII…RELCSYIDQE (160 aa).

The protein localises to the cytoplasm. It localises to the nucleus. Has a role in meiosis. The polypeptide is Meiotically up-regulated gene 10 protein (mug10) (Schizosaccharomyces pombe (strain 972 / ATCC 24843) (Fission yeast)).